We begin with the raw amino-acid sequence, 408 residues long: Putative polysaccharide ligase RBE_0399 (408 aa).

10 helical membrane passes run 5–25 (FFIF…AATV), 72–92 (MTIK…LFAI), 94–114 (PINS…GFVV), 130–150 (LIFG…SYGF), 163–183 (MLDR…AILI), 192–212 (LILY…ASFL), 230–250 (IFSK…PIIA), 325–345 (ILQI…SLVY), 359–377 (FRAS…GMIS), and 380–400 (VWQI…KLLV).

The protein belongs to the O-antigen ligase family.

It localises to the membrane. The protein is Putative polysaccharide ligase RBE_0399 (rfaL) of Rickettsia bellii (strain RML369-C).